A 202-amino-acid chain; its full sequence is Small ribosomal subunit protein uS4 (202 aa).

A disordered region spans residues 18-44; the sequence is LPGLTRKSARREYPPGQHGQGRRKRSE. The S4 RNA-binding domain maps to 90 to 152; that stretch reads MRLDNTVFRL…DRSRKLIEAN (63 aa).

Belongs to the universal ribosomal protein uS4 family. In terms of assembly, part of the 30S ribosomal subunit. Contacts protein S5. The interaction surface between S4 and S5 is involved in control of translational fidelity.

Its function is as follows. One of the primary rRNA binding proteins, it binds directly to 16S rRNA where it nucleates assembly of the body of the 30S subunit. Functionally, with S5 and S12 plays an important role in translational accuracy. This chain is Small ribosomal subunit protein uS4, found in Picosynechococcus sp. (strain ATCC 27264 / PCC 7002 / PR-6) (Agmenellum quadruplicatum).